Consider the following 273-residue polypeptide: Protein FAM216A (273 aa).

The interval 1–47 (MLGQLLPHTARGLGAAEMPGQGPGSDWTERSSSAEPPAVAGTEGGGG) is disordered.

It belongs to the FAM216 family.

The polypeptide is Protein FAM216A (FAM216A) (Homo sapiens (Human)).